Consider the following 756-residue polypeptide: MTTSHILGFPRVGAKRELKFAQERYWRKELAEQDLLDLAKALREKNWKHQAAANADFVAVGDFTFYDHILDLQVATGAIPARFGFDSQNLTLDQYFQLARGNKDQFAIEMTKWFDTNYHYLVPEFQKSTAFKANPAHYVNQIREAKALGLNFKPVIVGPLTFLWLGKEKGEAFNRFDLLNQLVPVYVEILNALVAEGAEWIQIDEPALALDLPAEWVEAYKSVYAELSKVNAKLLLATYFGSVAEHAELLKALPVAGLHLDLVRAPEQLAAFEDYSKVLSAGVIEGRNIWRANLNKVLDVLEPLKAKLGERLWIAPSCSLLHTPFDLEVEVQLKEKNTALYSWLSFTLQKVEELNVLKQALNNGRASVQAALDASQAAADARATSKEIHRPEVAERLANLPKGADQRKSPFAERIVKQNAWLNLPLLPTTNIGSFPQTTEIRHARASFKKGELSLADYEAAMKKEIEYVVRRQEELDLDVLVHGEAERNDMVEYFGELLDGFAFTKFGWVQSYGSRCVKPPVIYGDVTRPEPMTVRWSQYAQSLTNRVMKGMLTGPVTILQWSFVRNDIPRSTVCKQIGVALSDEVLDLEAAGIKVIQIDEPAIREGLPLKRADWDAYLQWAGEAFRLSSMGVQDDTQIHTHMCYSEFNDILPAIAALDADVITIETSRSDMELLTAFADFKYPNDIGPGVYDIHSPRVPTAAEVEHLLRKALNVIPKERLWVNPDCGLKTRGWTETIDQLKVMVDVTKKLRAELA.

5-methyltetrahydropteroyltri-L-glutamate contacts are provided by residues 16-19 and lysine 112; that span reads RELK. L-homocysteine contacts are provided by residues 432 to 434 and glutamate 485; that span reads IGS. L-methionine-binding positions include 432 to 434 and glutamate 485; that span reads IGS. 5-methyltetrahydropteroyltri-L-glutamate is bound by residues 516 to 517 and tryptophan 562; that span reads RC. An L-homocysteine-binding site is contributed by aspartate 600. Residue aspartate 600 participates in L-methionine binding. Position 606 (glutamate 606) interacts with 5-methyltetrahydropteroyltri-L-glutamate. Zn(2+) contacts are provided by histidine 642, cysteine 644, and glutamate 666. Residue histidine 695 is the Proton donor of the active site. Position 727 (cysteine 727) interacts with Zn(2+).

The protein belongs to the vitamin-B12 independent methionine synthase family. It depends on Zn(2+) as a cofactor.

It catalyses the reaction 5-methyltetrahydropteroyltri-L-glutamate + L-homocysteine = tetrahydropteroyltri-L-glutamate + L-methionine. The protein operates within amino-acid biosynthesis; L-methionine biosynthesis via de novo pathway; L-methionine from L-homocysteine (MetE route): step 1/1. Its function is as follows. Catalyzes the transfer of a methyl group from 5-methyltetrahydrofolate to homocysteine resulting in methionine formation. This Haemophilus influenzae (strain PittEE) protein is 5-methyltetrahydropteroyltriglutamate--homocysteine methyltransferase.